The primary structure comprises 592 residues: Autophagy-related protein 22-1 (592 aa).

4 consecutive transmembrane segments (helical) span residues 31 to 51, 108 to 128, 143 to 163, and 167 to 187; these read YGWAAEVFVVCAMGSFLPITL, TASFALYTFSLSVLVQAVIII, LLIVFAFIGSIATMLFLVVVP, and LLGGLLAIISNTCFGASFVLL. An N-linked (GlcNAc...) asparagine glycan is attached at N213. Transmembrane regions (helical) follow at residues 271–291, 301–321, 364–384, 398–418, 433–453, 468–490, 502–524, and 534–554; these read IGIGYIGAVILQVISILVVVV, LVLFLIGLWWFVFTIPASLWL, IVIFLAAWFLLSDGIATVSGT, AALGLINVIVMLAGVFGAFSW, IIACIILFELIPLYGLLGFIP, MYPLGALYGLVMGGLSSYCRSFF, FYALYAITDKGSSIFGPAIVGAI, and AFVFLAVLIFVPLPLMLLVDV. The segment at 572 to 592 is disordered; that stretch reads PQGSEYGAISDDQTTEDPIEE.

It belongs to the ATG22 family.

It localises to the vacuole membrane. Vacuolar effluxer which mediate the efflux of amino acids resulting from autophagic degradation. The release of autophagic amino acids allows the maintenance of protein synthesis and viability during nitrogen starvation. This is Autophagy-related protein 22-1 (atg22-1) from Penicillium rubens (strain ATCC 28089 / DSM 1075 / NRRL 1951 / Wisconsin 54-1255) (Penicillium chrysogenum).